We begin with the raw amino-acid sequence, 336 residues long: Ornithine carbamoyltransferase, catabolic (336 aa).

Carbamoyl phosphate contacts are provided by residues 57 to 60, Gln-84, Arg-108, and 136 to 139; these read STRT and HPTQ. L-ornithine-binding positions include Asn-169, Asp-233, and 237 to 238; that span reads SM. Carbamoyl phosphate is bound by residues 275–276 and Arg-322; that span reads CL.

This sequence belongs to the aspartate/ornithine carbamoyltransferase superfamily. OTCase family.

It localises to the cytoplasm. It catalyses the reaction carbamoyl phosphate + L-ornithine = L-citrulline + phosphate + H(+). Its pathway is amino-acid degradation; L-arginine degradation via ADI pathway; carbamoyl phosphate from L-arginine: step 2/2. Reversibly catalyzes the transfer of the carbamoyl group from carbamoyl phosphate (CP) to the N(epsilon) atom of ornithine (ORN) to produce L-citrulline. This Chromobacterium violaceum (strain ATCC 12472 / DSM 30191 / JCM 1249 / CCUG 213 / NBRC 12614 / NCIMB 9131 / NCTC 9757 / MK) protein is Ornithine carbamoyltransferase, catabolic.